A 503-amino-acid polypeptide reads, in one-letter code: uncharacterized protein (503 aa).

Belongs to the Mg-chelatase subunits D/I family. ComM subfamily.

This is an uncharacterized protein from Mycobacterium bovis (strain ATCC BAA-935 / AF2122/97).